Reading from the N-terminus, the 385-residue chain is Transcription factor-like protein DPB (385 aa).

Disordered stretches follow at residues 1-53 (MTTT…EQTI) and 71-102 (DIQG…KTGR). The segment covering 22 to 31 (PSTRSWGTAV) has biased composition (polar residues). The span at 32–53 (SGQSVSTSGSMGSPSSRSEQTI) shows a compositional bias: low complexity. A DNA-binding region spans residues 101–184 (GRGLRQFSMK…KKEIQWRGLP (84 aa)). Residues 150–184 (DEKNIRRRVYDALNVLMAMDIISKDKKEIQWRGLP) carry the DEF box motif. Residues 185 to 234 (RTSLSDIEELKNERLSLRNRIEKKTAYSQELEEQYVGLQNLIQRNEHLYS) are a coiled coil. The interval 296-385 (PPQQPNGRNN…IMNSSMKPEN (90 aa)) is disordered. Residues 300 to 327 (PNGRNNSQLVCHNFTPENPNKGPSTGPT) show a composition bias toward polar residues. Positions 336 to 349 (HLQSQQHQQHSQLQ) are enriched in low complexity. The span at 355–364 (ETNNVTSSAD) shows a compositional bias: polar residues.

This sequence belongs to the E2F/DP family. As to quaternary structure, heterodimer with non-phosphorylated E2FC. No interaction with phosphorylated E2FC. Interacts preferentially with E2FC, but also with E2FA and E2FB. Interacts with SKP2A. Targeted for proteasomal degradation by the SCF(SKP2A) E3 ubiquitin ligase complex. Phosphorylated. As to expression, ubiquitous.

It localises to the nucleus. The protein resides in the cytoplasm. Its function is as follows. Involved in the regulation of the G1/S transition. Increases the DNA binding activity of E2F proteins after heterodimerization. The complex DPB/E2FC restricts cell division and lateral root initiation and may function as a negative regulator of E2F-regulated genes. The interaction with SKP2A is controlled by auxin. The polypeptide is Transcription factor-like protein DPB (DPB) (Arabidopsis thaliana (Mouse-ear cress)).